The chain runs to 199 residues: FMN-dependent NADH:quinone oxidoreductase (199 aa).

FMN is bound by residues 17-19 (SNS) and 87-90 (MYNF).

The protein belongs to the azoreductase type 1 family. As to quaternary structure, homodimer. It depends on FMN as a cofactor.

The enzyme catalyses 2 a quinone + NADH + H(+) = 2 a 1,4-benzosemiquinone + NAD(+). It catalyses the reaction N,N-dimethyl-1,4-phenylenediamine + anthranilate + 2 NAD(+) = 2-(4-dimethylaminophenyl)diazenylbenzoate + 2 NADH + 2 H(+). In terms of biological role, quinone reductase that provides resistance to thiol-specific stress caused by electrophilic quinones. Also exhibits azoreductase activity. Catalyzes the reductive cleavage of the azo bond in aromatic azo compounds to the corresponding amines. The protein is FMN-dependent NADH:quinone oxidoreductase of Mycoplasma mycoides subsp. mycoides SC (strain CCUG 32753 / NCTC 10114 / PG1).